The sequence spans 396 residues: Protein Njmu-R1 (396 aa).

Residues 1-78 (MLPSLQESMD…SGDDFSLSLA (78 aa)) form a disordered region. A phosphoserine mark is found at Ser8 and Ser18. Over residues 9-24 (MDGDEKELESSEEGGS) the composition is skewed to acidic residues. Positions 58-67 (GSPSGTNAET) are enriched in polar residues.

In terms of assembly, component of the complex WDR11 composed of C17orf75, FAM91A1 and WDR11; FAM91A1 and WDR11 are required for proper location of the complex. Interacts with TBC1D23; this interaction may be indirect and recruits TBC1D23 to AP-1-derived vesicles. As to expression, highly expressed in testis and also expressed in fetal testis.

It is found in the golgi apparatus. Its subcellular location is the trans-Golgi network. The protein localises to the cytoplasmic vesicle. As component of the WDR11 complex acts together with TBC1D23 to facilitate the golgin-mediated capture of vesicles generated using AP-1. May have a role in spermatogenesis. The sequence is that of Protein Njmu-R1 (C17orf75) from Homo sapiens (Human).